The primary structure comprises 216 residues: Calcium-binding protein 2 (216 aa).

A disordered region spans residues 1–41; that stretch reads MGNCAKTPWHRGSKERWQWPGSPLGGSRPSPGPRTEEQEGT. Gly2 carries N-myristoyl glycine lipidation. The segment covering 20–29 has biased composition (low complexity); it reads PGSPLGGSRP. EF-hand domains follow at residues 74-109, 125-142, 148-183, and 185-216; these read EEIE…LGYM, GKVD…KLLA, IGVR…LLGE, and LSQR…MMSR. Ca(2+) is bound by residues Asp87, Asp89, Asp91, Tyr93, and Glu98. Ca(2+)-binding residues include Asp161, Asn163, Asp165, Cys167, Glu172, Asp198, Asn200, Asp202, and Glu209.

As to expression, expressed in the inner hair cells (IHCs), outer hair cells,(OHCs) and vestibular hair cells within the ear and in the retina (at protein level). Expressed in the retinal cone type 6 ON-bipolar cells and type 1 OFF-bipolar cells (at protein level). Expressed in the organ of Corti and spiral ganglion neurons in the cochlea (at protein level).

It localises to the cytoplasm. The protein resides in the perinuclear region. It is found in the cell membrane. The protein localises to the golgi apparatus. In terms of biological role, required for sound encoding at inner hair cells (IHCs) synapses, likely via inhibition of the inactivation of voltage-gated calcium channel of type 1.3 (Cav1.3) in the IHCs. Required for the normal transfer of light signals through the retina. This chain is Calcium-binding protein 2 (Cabp2), found in Mus musculus (Mouse).